Consider the following 432-residue polypeptide: Enolase (432 aa).

Glutamine 167 is a binding site for (2R)-2-phosphoglycerate. The Proton donor role is filled by glutamate 209. 3 residues coordinate Mg(2+): aspartate 246, glutamate 287, and aspartate 314. (2R)-2-phosphoglycerate contacts are provided by lysine 339, arginine 368, serine 369, and lysine 390. The active-site Proton acceptor is the lysine 339.

The protein belongs to the enolase family. Mg(2+) is required as a cofactor.

The protein localises to the cytoplasm. It is found in the secreted. The protein resides in the cell surface. The enzyme catalyses (2R)-2-phosphoglycerate = phosphoenolpyruvate + H2O. It participates in carbohydrate degradation; glycolysis; pyruvate from D-glyceraldehyde 3-phosphate: step 4/5. Functionally, catalyzes the reversible conversion of 2-phosphoglycerate (2-PG) into phosphoenolpyruvate (PEP). It is essential for the degradation of carbohydrates via glycolysis. This is Enolase from Prochlorococcus marinus (strain MIT 9211).